Here is a 933-residue protein sequence, read N- to C-terminus: Serine/threonine-protein kinase PknD (933 aa).

Residues 4-291 (YDIIRMIGKG…ELKDDIEQHL (288 aa)) enclose the Protein kinase domain. Residues 10 to 18 (IGKGGMGEV) and K33 contribute to the ATP site. The active-site Proton acceptor is the D138.

It belongs to the protein kinase superfamily. Ser/Thr protein kinase family. Autophosphorylated on serine and threonine residues.

It catalyses the reaction L-seryl-[protein] + ATP = O-phospho-L-seryl-[protein] + ADP + H(+). It carries out the reaction L-threonyl-[protein] + ATP = O-phospho-L-threonyl-[protein] + ADP + H(+). Functionally, together with the serine/threonine kinase Pkn1, may play a role in the specific interactions with host proteins during intracellular growth. This is Serine/threonine-protein kinase PknD from Chlamydia felis (strain Fe/C-56) (Chlamydophila felis).